Consider the following 461-residue polypeptide: Ribitol-5-phosphate transferase FKTN (461 aa).

At 1 to 7 (MSRINKN) the chain is on the cytoplasmic side. The segment at 6–27 (KNVVLALLTLTSSAFLLFQLYY) is required and sufficient for interaction with POMGNT1. A helical; Signal-anchor for type II membrane protein transmembrane segment spans residues 8 to 28 (VVLALLTLTSSAFLLFQLYYY). The Lumenal portion of the chain corresponds to 29–461 (KHYLSARNGP…SEWDEVIQLY (433 aa)). N92 is a glycosylation site (N-linked (GlcNAc...) asparagine).

This sequence belongs to the LicD transferase family. As to quaternary structure, forms a complex composed of FKTN/fukutin, FKRP and RXYLT1/TMEM5. Interacts (via transmembrane domain) with POMGNT1; the interaction is direct and is required for normal POMGNT1 location in Golgi membranes. As to expression, expressed in the retina, with highest levels found in the inner segments of photoreceptors and the outer plexiform layer (at protein level). Expressed at lower levels in the inner and outer nuclear layers, the inner plexiform layers, and the ganglion cell layers of the retina (at protein level). Expressed in the heart, brain, spleen, lung, liver, skeletal muscle, kidney and testis.

It is found in the golgi apparatus membrane. It localises to the cytoplasm. The protein resides in the nucleus. The protein localises to the endoplasmic reticulum. It carries out the reaction 3-O-[beta-D-GalNAc-(1-&gt;3)-beta-D-GlcNAc-(1-&gt;4)-(O-6-P-alpha-D-Man)]-Thr-[protein] + CDP-L-ribitol = 3-O-[Rib-ol-P-3-beta-D-GalNAc-(1-&gt;3)-beta-D-GlcNAc-(1-&gt;4)-(O-6-P-alpha-D-Man)]-Thr-[protein] + CMP + H(+). It participates in protein modification; protein glycosylation. Its function is as follows. Catalyzes the transfer of CDP-ribitol to the distal N-acetylgalactosamine of the phosphorylated O-mannosyl trisaccharide (N-acetylgalactosamine-beta-3-N-acetylglucosamine-beta-4-(phosphate-6-)mannose), a carbohydrate structure present in alpha-dystroglycan (DAG1). This constitutes the first step in the formation of the ribitol 5-phosphate tandem repeat which links the phosphorylated O-mannosyl trisaccharide to the ligand binding moiety composed of repeats of 3-xylosyl-alpha-1,3-glucuronic acid-beta-1. Required for normal location of POMGNT1 in Golgi membranes, and for normal POMGNT1 activity. May interact with and reinforce a large complex encompassing the outside and inside of muscle membranes. Could be involved in brain development. This chain is Ribitol-5-phosphate transferase FKTN, found in Mus musculus (Mouse).